Consider the following 359-residue polypeptide: Histidinol-phosphate aminotransferase (359 aa).

The residue at position 217 (Lys217) is an N6-(pyridoxal phosphate)lysine.

It belongs to the class-II pyridoxal-phosphate-dependent aminotransferase family. Histidinol-phosphate aminotransferase subfamily. As to quaternary structure, homodimer. The cofactor is pyridoxal 5'-phosphate.

It carries out the reaction L-histidinol phosphate + 2-oxoglutarate = 3-(imidazol-4-yl)-2-oxopropyl phosphate + L-glutamate. It functions in the pathway amino-acid biosynthesis; L-histidine biosynthesis; L-histidine from 5-phospho-alpha-D-ribose 1-diphosphate: step 7/9. In Salmonella paratyphi A (strain ATCC 9150 / SARB42), this protein is Histidinol-phosphate aminotransferase.